Here is a 404-residue protein sequence, read N- to C-terminus: Protrudin (404 aa).

The tract at residues 1–25 (MQSSDRDLSGPEASPSVMPEVLSEC) is disordered. Topologically, residues 1 to 63 (MQSSDRDLSG…LKDAGDGVRY (63 aa)) are cytoplasmic. Positions 1-92 (MQSSDRDLSG…LFLTLNEGAW (92 aa)) are sufficient for homooligomerization. Residues 1 to 205 (MQSSDRDLSG…LYLLPLCWVL (205 aa)) are sufficient for localization to endoplasmic reticulum tubular network and for interactions with REEP1, REEP5, ATL1, ATL2, ATL3 and SPAST. The interval 51–64 (LEPLKDAGDGVRYL) is necessary for interaction with RAB11A and function in neurite outgrowth. The chain crosses the membrane as a helical span at residues 64–85 (LLRWQMPLCSLLTCLGLNILFL). Topologically, residues 86–90 (TLNEG) are lumenal. A helical membrane pass occupies residues 91-109 (AWYSVGALIISVPALLGYL). Residues 110 to 187 (QEVCRAQLPE…NPVVSSQFYG (78 aa)) lie on the Cytoplasmic side of the membrane. The segment at residues 188–208 (ALLGMVCMLYLLPLCWVLALL) is an intramembrane region (helical). Topologically, residues 209–404 (NSTLFLGNGE…CASCNQTLSK (196 aa)) are cytoplasmic. Positions 259–299 (DSTPAPTPTEDLTPGSVEEAEEAEPDEEFKDAIEEDDEGTP) are disordered. Positions 271–354 (TPGSVEEAEE…GCAATFSVLK (84 aa)) are necessary for interaction with KIF5A. The span at 276–299 (EEAEEAEPDEEFKDAIEEDDEGTP) shows a compositional bias: acidic residues. Residues 286 to 292 (EFKDAIE) form a necessary for interaction with VAPA region. The segment at 337–403 (TNNFGNCAGC…VCASCNQTLS (67 aa)) adopts an FYVE-type zinc-finger fold. 8 residues coordinate Zn(2+): cysteine 343, cysteine 346, cysteine 359, cysteine 362, cysteine 367, cysteine 370, cysteine 395, and cysteine 398.

As to quaternary structure, can form homooligomers (monomers, dimers and tetramers). Interacts with FKBP8; may negatively regulate ZFYVE27 phosphorylation. Interacts with VAPA (via MSP domain); may regulate ZFYVE27 retention in the endoplasmic reticulum and its function in cell projections formation. Interacts with VAPB (via MSP domain). Interacts with RAB11A (GDP-bound form); regulates RAB11A. Interacts with RAB11B (GDP-bound form), REEP1, REEP5, ATL1, ATL2, ATL3, SPAST, SURF4, KIF5A, KIF5B, KIF5C and RTN3. In terms of processing, phosphorylated. Phosphorylation is induced by NGF through the MAPK/ERK pathway and modulates interaction with RAB11A.

It localises to the recycling endosome membrane. The protein resides in the endoplasmic reticulum membrane. It is found in the cell projection. Its subcellular location is the growth cone membrane. In terms of biological role, key regulator of RAB11-dependent vesicular trafficking during neurite extension through polarized membrane transport. Promotes axonal elongation and contributes to the establishment of neuronal cell polarity. Involved in nerve growth factor-induced neurite formation in VAPA-dependent manner. Contributes to both the formation and stabilization of the tubular ER network. Involved in ER morphogenesis by regulating the sheet-to-tubule balance and possibly the density of tubule interconnections. Acts as an adapter protein that facilitates the interaction of KIF5A with VAPA, VAPB, SURF4, RAB11A, RAB11B and RTN3 and the ZFYVE27-KIF5A complex contributes to the transport of these proteins in neurons. Can induce formation of neurite-like membrane protrusions in non-neuronal cells in a KIF5A/B-dependent manner. The protein is Protrudin (Zfyve27) of Rattus norvegicus (Rat).